The following is an 87-amino-acid chain: Small ribosomal subunit protein uS19 (87 aa).

It belongs to the universal ribosomal protein uS19 family.

Protein S19 forms a complex with S13 that binds strongly to the 16S ribosomal RNA. The protein is Small ribosomal subunit protein uS19 of Mesoplasma florum (strain ATCC 33453 / NBRC 100688 / NCTC 11704 / L1) (Acholeplasma florum).